Here is a 284-residue protein sequence, read N- to C-terminus: L-fucose dehydrogenase (284 aa).

Arg-19, Ile-21, Asp-40, Lys-41, Asp-62, Val-63, Asn-89, Tyr-154, Lys-158, Ile-187, Thr-189, and Leu-191 together coordinate NAD(+).

Belongs to the short-chain dehydrogenases/reductases (SDR) family.

The enzyme catalyses L-fucose + NAD(+) = L-fucono-1,5-lactone + NADH + H(+). It carries out the reaction D-arabinose + NAD(+) = D-arabinono-1,5-lactone + NADH + H(+). The catalysed reaction is L-galactose + NAD(+) = L-galactono-1,5-lactone + NADH + H(+). It functions in the pathway carbohydrate degradation; L-fucose degradation. In terms of biological role, catalyzes the NAD(+)-dependent oxidation of L-fucose, yielding L-fucono-1,5-lactone, which rapidly converts spontaneously to L-fucone-1,4-lactone. Can also act on D-arabinose and L-galactose, with lower catalytic efficiency. Does not use NADPH. May be the initial enzyme of the putative L-fucose degradation pathway in mammals. The chain is L-fucose dehydrogenase (HSD17B14) from Oryctolagus cuniculus (Rabbit).